Consider the following 492-residue polypeptide: MDFWLYKQAQQNGHHIAITDGQESYTYQNLYCEASLLAKRLKAYQQSRVGLYIDNSIQSIILIHACWLANIEIAMINTRLTPNEMTNQMRSIDVQLIFCTLPLELRGFQIVSLDDIEFAGTDITTNGLLDNTMGIQYDTSNETVVPKDSPSNILNTSFNLDDIASIMFTSGTTGPQKAVPQTFRNHYASAIGCKESLGFDRDTNWLSVLPIYHISGLSVLLRAVIEGFTVRIVDKFNAEQILTMIKNERITHISLVPQTLNWLMQQGLHEPYDLQKILLGGAKLSASMIETALQYNLPIYNSFGMTETCSQFLTATPEMLHARPDTVGMPSANVDVKIKNPNKKGHGELMIKGANVMNGYLYPTDLTGTFENGYFNTGDIAEIDHEGYVMIYDRRKDLIISGGENIYPYQIETVAKQFPGIIDAVCVGHPDDTWGQVPKLYFVSESNISKAQLIAYLSQHLAKYKVPKHFEKVDTLPYTSTGKLQRNKLYRG.

This sequence belongs to the ATP-dependent AMP-binding enzyme family. MenE subfamily.

It carries out the reaction 2-succinylbenzoate + ATP + CoA = 2-succinylbenzoyl-CoA + AMP + diphosphate. Its pathway is quinol/quinone metabolism; 1,4-dihydroxy-2-naphthoate biosynthesis; 1,4-dihydroxy-2-naphthoate from chorismate: step 5/7. It participates in quinol/quinone metabolism; menaquinone biosynthesis. Its function is as follows. Converts 2-succinylbenzoate (OSB) to 2-succinylbenzoyl-CoA (OSB-CoA). In Staphylococcus aureus (strain MRSA252), this protein is 2-succinylbenzoate--CoA ligase.